The following is a 299-amino-acid chain: UPF0603 protein OsI_019212, chloroplastic (299 aa).

Low complexity-rich tracts occupy residues 1-14 and 22-36; these read METL…LSPL and ASPA…SSPA. Residues 1–41 constitute a chloroplast transit peptide; that stretch reads METLLSPSTLLSPLRGSKKKPASPAASASSSSSSPARSVVS. Disordered regions lie at residues 1–60 and 244–265; these read METL…WRGD and PDPG…TKEE. The N-terminal 57 residues, 42 to 98, are a transit peptide targeting the thylakoid; that stretch reads CALRRQQPPPQAVAAWRGDGGRGGGVGSWATFLQHGLAAAALSLAISMAPAPAPAVA. The span at 252–265 shows a compositional bias: basic and acidic residues; the sequence is KDNKRESNFKTKEE. A helical transmembrane segment spans residues 276–296; the sequence is VVGGLLVIAFVVPMAQYYAYI.

The protein belongs to the UPF0603 family.

It localises to the plastid. The protein localises to the chloroplast thylakoid membrane. In Oryza sativa subsp. indica (Rice), this protein is UPF0603 protein OsI_019212, chloroplastic.